We begin with the raw amino-acid sequence, 398 residues long: Inositol polyphosphate 5-phosphatase (398 aa).

Belongs to the inositol 1,4,5-trisphosphate 5-phosphatase type II family. Expressed in tail, cilia, dendrites, axon and male head.

It localises to the cytoplasm. In terms of biological role, dephosphorylates a number of phosphatidylinositols. Controls the cellular levels and subcellular distribution of phosphatidylinositol 3,5-bisphosphate and phosphatidylinositol 3,4,5-trisphosphate. Has a role in sperm activation and motility. Influences the localization of the transient receptor potential polycystin (TRPP) complex proteins lov-1 and pkd-2. The protein is Inositol polyphosphate 5-phosphatase of Caenorhabditis elegans.